A 956-amino-acid polypeptide reads, in one-letter code: UvrABC system protein A (956 aa).

An ATP-binding site is contributed by 33-40 (GLSGSGKS). The segment at 252-279 (CPYCGFSVGELEPRMFSFNSPFGACPTC) adopts a C4-type zinc-finger fold. ABC transporter domains lie at 309 to 587 (WRPI…KNSI) and 607 to 936 (GNGL…KYLK). Residue 639–646 (GVSGSGKS) coordinates ATP. Residues 738–764 (CEACKGDGIIKIEMHFLPDVYVPCEVC) form a C4-type zinc finger.

It belongs to the ABC transporter superfamily. UvrA family. Forms a heterotetramer with UvrB during the search for lesions.

The protein localises to the cytoplasm. The UvrABC repair system catalyzes the recognition and processing of DNA lesions. UvrA is an ATPase and a DNA-binding protein. A damage recognition complex composed of 2 UvrA and 2 UvrB subunits scans DNA for abnormalities. When the presence of a lesion has been verified by UvrB, the UvrA molecules dissociate. The chain is UvrABC system protein A from Listeria monocytogenes serovar 1/2a (strain ATCC BAA-679 / EGD-e).